The following is a 213-amino-acid chain: Thymidylate kinase (213 aa).

10–17 serves as a coordination point for ATP; that stretch reads GLEGAGKT.

It belongs to the thymidylate kinase family.

It carries out the reaction dTMP + ATP = dTDP + ADP. In terms of biological role, phosphorylation of dTMP to form dTDP in both de novo and salvage pathways of dTTP synthesis. This is Thymidylate kinase from Escherichia coli O6:H1 (strain CFT073 / ATCC 700928 / UPEC).